Reading from the N-terminus, the 224-residue chain is Inner membrane-spanning protein YciB (224 aa).

6 consecutive transmembrane segments (helical) span residues 20-40, 61-81, 86-106, 123-143, 156-176, and 187-207; these read GVNP…FFFA, IFVA…ASWL, LPIM…LTLY, LFGG…GYVF, KLTF…EVVW, and FKVW…MPLI.

The protein belongs to the YciB family.

It localises to the cell inner membrane. Plays a role in cell envelope biogenesis, maintenance of cell envelope integrity and membrane homeostasis. This is Inner membrane-spanning protein YciB from Mesorhizobium japonicum (strain LMG 29417 / CECT 9101 / MAFF 303099) (Mesorhizobium loti (strain MAFF 303099)).